A 311-amino-acid polypeptide reads, in one-letter code: MSSREVTSRLREKVWNGSVPLEIRLHKGDCRTYDDSDAYLIQFPRLSYLALLIHKLHAFFAPSLIYPDIHPSDLWFSYEGVPLKWHYPLGLLYDLYSGAEPYHPSDSPPPSPTTPSKQDSKQPLPWRLTLHTSAYPTTQLIPLDNNNLQIHDLFIHSVKEADYLRTGTGKTVMFLSQADSTQLWDAVVKHDFALFNPINQKLLNPQGVNLRHLPVRLYLPHAGVDEEDRGMGSVRVVQSLVKVEVGSRQPQTIGTALNQILPTLFPSRRSALLAQAVLHGAVVPLGASVEELIRSVAYLDGWLHIAIVMMG.

The disordered stretch occupies residues 102–122 (YHPSDSPPPSPTTPSKQDSKQ). A Glycyl lysine isopeptide (Lys-Gly) (interchain with G-Cter in ATG12) cross-link involves residue Lys159.

Belongs to the ATG5 family. Conjugated with ATG12. In terms of processing, conjugated to ATG12; which is essential for autophagy.

It is found in the preautophagosomal structure membrane. Functionally, involved in cytoplasm to vacuole transport (Cvt) and autophagic vesicle formation. Autophagy is essential for maintenance of amino acid levels and protein synthesis under nitrogen starvation. Required for selective autophagic degradation of the nucleus (nucleophagy). Also required for mitophagy, which eliminates defective or superfluous mitochondria in order to fulfill cellular energy requirements and prevent excess ROS production. Conjugation with ATG12, through a ubiquitin-like conjugating system involving ATG7 as an E1-like activating enzyme and ATG10 as an E2-like conjugating enzyme, is essential for its function. The ATG12-ATG5 conjugate acts as an E3-like enzyme which is required for lipidation of ATG8 and ATG8 association to the vesicle membranes. In Phaeosphaeria nodorum (strain SN15 / ATCC MYA-4574 / FGSC 10173) (Glume blotch fungus), this protein is Autophagy protein 5 (ATG5).